The chain runs to 300 residues: GTPase Era (300 aa).

The 168-residue stretch at 6–173 (KSGFVAIVGR…MDVLVEQMPE (168 aa)) folds into the Era-type G domain. The G1 stretch occupies residues 14–21 (GRPNVGKS). 14–21 (GRPNVGKS) contributes to the GTP binding site. A G2 region spans residues 40–44 (QTTRN). The segment at 61–64 (DTPG) is G3. GTP-binding positions include 61–65 (DTPGI) and 123–126 (NKID). The interval 123–126 (NKID) is G4. The segment at 152-154 (ISA) is G5. The region spanning 204-281 (TRDEIPHSVA…YLELWVKVQK (78 aa)) is the KH type-2 domain.

It belongs to the TRAFAC class TrmE-Era-EngA-EngB-Septin-like GTPase superfamily. Era GTPase family. As to quaternary structure, monomer.

The protein localises to the cytoplasm. It is found in the cell membrane. Its function is as follows. An essential GTPase that binds both GDP and GTP, with rapid nucleotide exchange. Plays a role in 16S rRNA processing and 30S ribosomal subunit biogenesis and possibly also in cell cycle regulation and energy metabolism. In Enterococcus faecalis (strain ATCC 700802 / V583), this protein is GTPase Era.